We begin with the raw amino-acid sequence, 196 residues long: Peptidyl-tRNA hydrolase (196 aa).

Tyr18 contributes to the tRNA binding site. The active-site Proton acceptor is the His23. Residues Phe69, Asn71, and Asn117 each contribute to the tRNA site.

This sequence belongs to the PTH family. As to quaternary structure, monomer.

It is found in the cytoplasm. The catalysed reaction is an N-acyl-L-alpha-aminoacyl-tRNA + H2O = an N-acyl-L-amino acid + a tRNA + H(+). Its function is as follows. Hydrolyzes ribosome-free peptidyl-tRNAs (with 1 or more amino acids incorporated), which drop off the ribosome during protein synthesis, or as a result of ribosome stalling. Functionally, catalyzes the release of premature peptidyl moieties from peptidyl-tRNA molecules trapped in stalled 50S ribosomal subunits, and thus maintains levels of free tRNAs and 50S ribosomes. The chain is Peptidyl-tRNA hydrolase from Vibrio campbellii (strain ATCC BAA-1116).